A 279-amino-acid polypeptide reads, in one-letter code: MAHDEQLWLTPRLQKAAALCNQTPAASDTPLWLGVDLGTCDVVSMVVDGNAQPVAVCLDWADVVRDGIVWDFFGAVTLVRRHLDTLEQQLGCRFTHAATSFPPGTDPRISINVLESAGLEVSHVLDEPTAVADLLALDNAGVVDIGGGTTGIAIVKQGKVTYSADEATGGHHISLTLAGNRRIPLEEAEQYKRSNAQEIWPVVKPVYEKMAEIVARHIEGQGIADLWLAGGSCMQPGVEALFRQRFPELQVHLPQHSLFMTPLAIANSGRAKAEGLYAS.

This sequence belongs to the EutJ family.

Its pathway is amine and polyamine degradation; ethanolamine degradation. In terms of biological role, may protect ethanolamine ammonia-lyase (EAL, eutB-eutC) from inhibition, may function in assembling the bacterial microcompartment and/or in refolding EAL, suggesting it may have chaperone activity. Overexpression of eutJ and eutS in E.coli leads to multiple BMC-like structures; eutS expression alone leads to 1 BMC-like structure per cell. Functionally, expression of the eut operon allows this bacteria to use ethanolamine (EA) as a carbon, nitrogen and energy source. It relies on cobalamin (vitamin B12) both as a cofactor for the ethanolamine ammonia-lyase (EAL) activity and to induce the operon. EA enhances bacterial survival in macrophages in a concentration-dependent manner, suggesting it is an important nutrient during infection. The polypeptide is Ethanolamine utilization protein EutJ (Salmonella typhimurium (strain LT2 / SGSC1412 / ATCC 700720)).